Here is a 389-residue protein sequence, read N- to C-terminus: Phosphopentomutase (389 aa).

Mn(2+) contacts are provided by Asp-12, Asp-284, His-289, Asp-325, His-326, and His-337.

This sequence belongs to the phosphopentomutase family. Mn(2+) serves as cofactor.

Its subcellular location is the cytoplasm. It carries out the reaction 2-deoxy-alpha-D-ribose 1-phosphate = 2-deoxy-D-ribose 5-phosphate. The catalysed reaction is alpha-D-ribose 1-phosphate = D-ribose 5-phosphate. It functions in the pathway carbohydrate degradation; 2-deoxy-D-ribose 1-phosphate degradation; D-glyceraldehyde 3-phosphate and acetaldehyde from 2-deoxy-alpha-D-ribose 1-phosphate: step 1/2. In terms of biological role, isomerase that catalyzes the conversion of deoxy-ribose 1-phosphate (dRib-1-P) and ribose 1-phosphate (Rib-1-P) to deoxy-ribose 5-phosphate (dRib-5-P) and ribose 5-phosphate (Rib-5-P), respectively. This is Phosphopentomutase from Anaeromyxobacter sp. (strain Fw109-5).